Reading from the N-terminus, the 269-residue chain is Hydroxyethylthiazole kinase (269 aa).

Substrate is bound at residue Met-45. ATP contacts are provided by Arg-121 and Thr-167. Gly-194 contacts substrate.

This sequence belongs to the Thz kinase family. Requires Mg(2+) as cofactor.

It catalyses the reaction 5-(2-hydroxyethyl)-4-methylthiazole + ATP = 4-methyl-5-(2-phosphooxyethyl)-thiazole + ADP + H(+). It participates in cofactor biosynthesis; thiamine diphosphate biosynthesis; 4-methyl-5-(2-phosphoethyl)-thiazole from 5-(2-hydroxyethyl)-4-methylthiazole: step 1/1. Its function is as follows. Catalyzes the phosphorylation of the hydroxyl group of 4-methyl-5-beta-hydroxyethylthiazole (THZ). The sequence is that of Hydroxyethylthiazole kinase from Bacillus licheniformis (strain ATCC 14580 / DSM 13 / JCM 2505 / CCUG 7422 / NBRC 12200 / NCIMB 9375 / NCTC 10341 / NRRL NRS-1264 / Gibson 46).